We begin with the raw amino-acid sequence, 423 residues long: Histidinol dehydrogenase (423 aa).

NAD(+)-binding residues include Tyr116, Gln177, and Asn200. Substrate is bound by residues Ser223, Gln245, and His248. Gln245 and His248 together coordinate Zn(2+). Catalysis depends on proton acceptor residues Glu313 and His314. Residues His314, Asp347, Glu401, and His406 each coordinate substrate. Asp347 provides a ligand contact to Zn(2+). Zn(2+) is bound at residue His406.

It belongs to the histidinol dehydrogenase family. Requires Zn(2+) as cofactor.

It carries out the reaction L-histidinol + 2 NAD(+) + H2O = L-histidine + 2 NADH + 3 H(+). Its pathway is amino-acid biosynthesis; L-histidine biosynthesis; L-histidine from 5-phospho-alpha-D-ribose 1-diphosphate: step 9/9. Functionally, catalyzes the sequential NAD-dependent oxidations of L-histidinol to L-histidinaldehyde and then to L-histidine. The sequence is that of Histidinol dehydrogenase from Staphylococcus saprophyticus subsp. saprophyticus (strain ATCC 15305 / DSM 20229 / NCIMB 8711 / NCTC 7292 / S-41).